The sequence spans 420 residues: MEFPEHGVRLLGRLRQQRELGFLCDCTVLVGDARFPAHRAVLAACSVYFHLFYRDQPASSRDTVRLNGDIVTVPAFSRLLDFMYEGRLDLHNLPVEDVLAAASYLHMYDIVKVCKGRLRKKDPDLETRTLGTELPGQPPHPLPSWSPAFCQAAPKAKHPSLGVKATHPLPTFGPPSWQVAEQSSGALDLSLKPSPRPEQVHPPCRLQTSLCSSVQQVAQPLVKAEQDSFSEQDSSSPQSADRSPPPVCASAAQGLAVDLEPLHIEGTGSQQLGLPAEPVLDSEELGPSRHLCICPLCCKLFPSTHALQLHLSAHFRERDSVRARLSPEGSVPTCPLCSKTFSCTYTLKRHERTHSGEKPYTCVQCGKSFQYSHNLSRHAVVHTREKPHACRWCERRFTQSGDLYRHVRKFHYGLVKPLLV.

Positions 24 to 92 (CDCTVLVGDA…MYEGRLDLHN (69 aa)) constitute a BTB domain. 2 disordered regions span residues 127 to 204 (TRTL…HPPC) and 222 to 247 (VKAEQDSFSEQDSSSPQSADRSPPPV). A compositionally biased stretch (low complexity) spans 227–241 (DSFSEQDSSSPQSAD). 4 consecutive C2H2-type zinc fingers follow at residues 292–314 (CICPLCCKLFPSTHALQLHLSAH), 332–354 (PTCPLCSKTFSCTYTLKRHERTH), 360–382 (YTCVQCGKSFQYSHNLSRHAVVH), and 388–411 (HACRWCERRFTQSGDLYRHVRKFH).

Belongs to the krueppel C2H2-type zinc-finger protein family. ZBTB18 subfamily. Highly expressed in skeletal muscle and ovary (at protein level). Low expression in brain, lung, spleen, liver and heart (at protein level). Not detected in kidney and intestines (at protein level). Also observed in testis and, at lower levels, in stomach and nervous system.

The protein resides in the cytoplasm. Its subcellular location is the nucleus. It is found in the nucleoplasm. Functionally, transcriptional repressor. Specifically binds DNA and probably acts by recruiting chromatin remodeling multiprotein complexes. The polypeptide is Zinc finger and BTB domain-containing protein 42 (Zbtb42) (Mus musculus (Mouse)).